A 508-amino-acid chain; its full sequence is Aldehyde dehydrogenase (508 aa).

Active-site residues include Glu-264 and Cys-303.

This sequence belongs to the aldehyde dehydrogenase family.

The enzyme catalyses acetaldehyde + NAD(+) + H2O = acetate + NADH + 2 H(+). It participates in organosulfur degradation. Functionally, catalyzes the NAD(+)-dependent oxidation of acetaldehyde to acetate. The chain is Aldehyde dehydrogenase from Paracoccus denitrificans (strain Pd 1222).